We begin with the raw amino-acid sequence, 639 residues long: MGMAAEVRMVLYEDDSVQVHYACGSTLQLSPCGSEFLFEKALPPSTHPLEQPERIRQRTHFVISNYREQLQRALDFRNSSATCPFLSESIIPPERKKHIFIDFSEVEWPSLDRDDCIMYSESGVVKITSLDGHAYLCLPRSQHEFTVHFLCKVSQRPDSSGILSETQNQDPKNKLVEKTRKVCRCGNLSEQTLRNKENEPPYQILKSKNASVNTCCVNDSEGRGELPSLGTNHRCVYAWVKQAWSVAACPEAWKHPLSLALRFYNKVRAASEIDADFPASSIVTSDCPEERGTEVSVLPRALLLSCPAPHMHRWTFCDSLLQRQPDAEDFSYPELVKVVWYKGVTYRLTHKNVNSIEIFPGDGSVFKSEGAHFGNYFTYYPSQEESEKREEKTYSVNNLPPDRPGNFFSVRSLIKQATRILQHCAKIRLSLSHNYRVCCWKMAPGVSVSTILPVLLKESLIPGVGRFLAYSDDKVHAVFLDGVTVTLNWHLSSSAEKKQVDQGLSFGWCRLTFPDGQDQLIPTEHPGAYERYVTSVISWCRGLTQTSPRQVPTHLSPALKENWSVASELEKIQKFNWLLENSGVLNLTSSKNEQCSGHCKSGSSETLLEATNEERVSVALKRTSEILQDIDRLLSLSRK.

This is an uncharacterized protein from Mus musculus (Mouse).